The sequence spans 795 residues: RalBP1-associated Eps domain-containing protein 1 (795 aa).

One can recognise an EH 1 domain in the interval 10–113 (EQKYYSDLFS…SKNEQESRLA (104 aa)). The segment at 112–238 (LAASYSSDSE…NWVSFADTPP (127 aa)) is disordered. Residues 115–126 (SYSSDSENQGSY) are compositionally biased toward polar residues. 4 positions are modified to phosphoserine: Ser-145, Ser-162, Ser-166, and Ser-170. Residues 156-168 (EQQEPVSPVVSPQ) show a composition bias toward low complexity. Residue Thr-173 is modified to Phosphothreonine. The span at 205–216 (GDAQAGSSAGDA) shows a compositional bias: low complexity. Phosphoserine is present on residues Ser-272 and Ser-273. Positions 285–374 (QRQYYVNQFK…ESLMPKLIDL (90 aa)) constitute an EH 2 domain. At Tyr-288 the chain carries Phosphotyrosine. Ser-307 is subject to Phosphoserine. An EF-hand domain is found at 318 to 353 (LPILELSHIWELSDFDKDGALTLDEFCAAFHLVVAR). The Ca(2+) site is built by Asp-331, Asp-333, Asp-335, and Glu-342. Disordered regions lie at residues 380 to 433 (VGEQ…SSQT) and 469 to 720 (ELKR…DEHT). A compositionally biased stretch (polar residues) spans 407-433 (LNQTWPELNQSSEQWETFSERSSSSQT). Residues Ser-475, Ser-482, and Ser-489 each carry the phosphoserine modification. Polar residues-rich tracts occupy residues 497-518 (INSS…SDSF) and 525-542 (IGSS…SPDN). Ser-539 bears the Phosphoserine mark. At Thr-543 the chain carries Phosphothreonine. Positions 543–553 (TAPPPPPPRPQ) are enriched in pro residues. Residue Ser-561 is modified to Phosphoserine. Over residues 562–573 (LDMNRTFAVTTG) the composition is skewed to polar residues. Residues 574 to 583 (QQQAGVVAHP) are compositionally biased toward low complexity. Residues 584 to 595 (PAVPPRPQPSQA) show a composition bias toward pro residues. Polar residues-rich tracts occupy residues 611–622 (THTSTSPQQIPE) and 681–692 (ATNVPANVSKGT). The segment at 651-795 (HPEVLPAEKA…LEQLRPFSHL (145 aa)) is interaction with RALBP1. Over residues 707-720 (KSEDELRPDVDEHT) the composition is skewed to basic and acidic residues. A phosphoserine mark is found at Ser-708 and Ser-739. Residues 750-790 (SIRRNKETNTVLARLNSELQQQLKDVLEERISLEVQLEQLR) adopt a coiled-coil conformation.

Homodimer (Potential). Interacts with RALBP1, CRK and GRB2. Binding to RALBP1 does not affect its Ral-binding activity. Forms a complex with the SH3 domains of CRK and GRB2 which may link it to an EGF-responsive tyrosine kinase. Interacts with RAB11FIP2. Interacts with AMPH, ITSN1 (via SH3 domains) and SGIP1; may be involved in clathrin-mediated endocytosis. In terms of processing, EGF stimulates phosphorylation on Tyr-residues. Expressed in all tissues examined. The highest level expression was found in the kidney and testis.

It is found in the membrane. Its subcellular location is the clathrin-coated pit. Its function is as follows. May coordinate the cellular actions of activated EGF receptors and Ral-GTPases. This Mus musculus (Mouse) protein is RalBP1-associated Eps domain-containing protein 1 (Reps1).